Here is a 276-residue protein sequence, read N- to C-terminus: Undecaprenyl-diphosphatase (276 aa).

5 helical membrane-spanning segments follow: residues 84–104 (YRLG…GLLF), 115–135 (LWVV…AEYL), 188–208 (FGFL…LPDA), 222–242 (QLLV…SWFL), and 250–270 (MYWF…LLAT).

The protein belongs to the UppP family.

It is found in the cell membrane. It catalyses the reaction di-trans,octa-cis-undecaprenyl diphosphate + H2O = di-trans,octa-cis-undecaprenyl phosphate + phosphate + H(+). In terms of biological role, catalyzes the dephosphorylation of undecaprenyl diphosphate (UPP). Confers resistance to bacitracin. The polypeptide is Undecaprenyl-diphosphatase (Mycobacterium ulcerans (strain Agy99)).